A 285-amino-acid polypeptide reads, in one-letter code: NAD kinase (285 aa).

Catalysis depends on Asp-66, which acts as the Proton acceptor. NAD(+)-binding positions include 66–67 (DG), 137–138 (ND), Arg-148, Arg-165, Asp-167, and 178–183 (TAYSMS).

This sequence belongs to the NAD kinase family. A divalent metal cation serves as cofactor.

Its subcellular location is the cytoplasm. The enzyme catalyses NAD(+) + ATP = ADP + NADP(+) + H(+). Functionally, involved in the regulation of the intracellular balance of NAD and NADP, and is a key enzyme in the biosynthesis of NADP. Catalyzes specifically the phosphorylation on 2'-hydroxyl of the adenosine moiety of NAD to yield NADP. The polypeptide is NAD kinase (Chlorobium luteolum (strain DSM 273 / BCRC 81028 / 2530) (Pelodictyon luteolum)).